A 1713-amino-acid polypeptide reads, in one-letter code: Serine/threonine-protein kinase MRCK beta (1713 aa).

The Protein kinase domain maps to 76 to 342; that stretch reads FEIIKVIGRG…IEDFKKHAFF (267 aa). Residues 82 to 90 and lysine 105 each bind ATP; that span reads IGRGAFGEV. The active-site Proton acceptor is the aspartate 200. Phosphoserine; by autocatalysis is present on residues serine 221 and serine 233. Threonine 239 carries the phosphothreonine; by autocatalysis modification. The AGC-kinase C-terminal domain maps to 343-413; it reads EGLNWENIRN…TTESCFSDRG (71 aa). At threonine 423 the chain carries Phosphothreonine. Positions 434-649 form a coiled coil; the sequence is LENSLQIEAY…ASKERKLREH (216 aa). The disordered stretch occupies residues 461–485; the sequence is LQESTQTVQSLHGSTRALGNSNRDK. Polar residues predominate over residues 463 to 481; it reads ESTQTVQSLHGSTRALGNS. Arginine 671 carries the omega-N-methylarginine modification. Coiled-coil stretches lie at residues 681–815 and 882–939; these read QEIS…AHWE and ALEA…FRAD. Serine 927 is modified (phosphoserine). Residue tyrosine 954 is modified to Phosphotyrosine. Polar residues-rich tracts occupy residues 971–994 and 1001–1014; these read ASDQETQASKLDLSPSVSVATSTE and RSQQRPSTVPLPNT. Positions 971–1014 are disordered; that stretch reads ASDQETQASKLDLSPSVSVATSTEQQEDAARSQQRPSTVPLPNT. Residues 1026–1076 form a Phorbol-ester/DAG-type zinc finger; sequence AHQFSIKSFPSPTQCSHCTSLMVGLIRQGYACEVCAFSCHVSCKDSAPQVC. The PH domain occupies 1096-1215; the sequence is GTAYKGYVKV…WVGILEGLQA (120 aa). Residues 1241-1515 enclose the CNH domain; that stretch reads IKTVLAAAIV…RPLNSDGSLN (275 aa). In terms of domain architecture, CRIB spans 1585–1598; that stretch reads ISNPTNFNHVAHMG. The segment at 1615 to 1713 is disordered; the sequence is PTAQEEKQGP…EGLDQPACDA (99 aa). A compositionally biased stretch (basic and acidic residues) spans 1666–1677; it reads DFDKEPDSDSTK. Phosphoserine occurs at positions 1682, 1684, 1688, 1692, and 1695.

Belongs to the protein kinase superfamily. AGC Ser/Thr protein kinase family. DMPK subfamily. Homodimer and homotetramer via the coiled coil regions. Interacts tightly with GTP-bound but not GDP-bound CDC42. Interacts with TJP1; this interaction requires the presence of catalytically active CDC42. Forms a tripartite complex with MYO18A and LURAP1 with the latter acting as an adapter connecting CDC42BPB and MYO18A. LURAP1 binding results in activation of CDC42BPB by abolition of its negative autoregulation. Interacts with STRIP1, STRN3 and SIKE1. Interacts with CPNE4 (via VWFA domain). Interacts with LURAP1. Interacts (via AGC-kinase C-terminal domain) with FAM89B/LRAP25 (via LRR repeat). Forms a tripartite complex with FAM89B/LRAP25 and LIMK1. It depends on Mg(2+) as a cofactor. Proteolytically cleaved by caspases upon apoptosis induction. As to expression, expressed in all tissues examined with highest levels in lung and kidney.

The protein resides in the cytoplasm. It localises to the cell membrane. It is found in the cell junction. Its subcellular location is the cell projection. The protein localises to the lamellipodium. It carries out the reaction L-seryl-[protein] + ATP = O-phospho-L-seryl-[protein] + ADP + H(+). The enzyme catalyses L-threonyl-[protein] + ATP = O-phospho-L-threonyl-[protein] + ADP + H(+). With respect to regulation, maintained in an inactive, closed conformation by an interaction between the kinase domain and the negative autoregulatory C-terminal coiled-coil region. Agonist binding to the phorbol ester binding site disrupts this, releasing the kinase domain to allow N-terminus-mediated dimerization and kinase activation by transautophosphorylation. Inhibited by chelerythrine chloride. In terms of biological role, serine/threonine-protein kinase which is an important downstream effector of CDC42 and plays a role in the regulation of cytoskeleton reorganization and cell migration. Regulates actin cytoskeletal reorganization via phosphorylation of PPP1R12C and MYL9/MLC2. In concert with MYO18A and LURAP1, is involved in modulating lamellar actomyosin retrograde flow that is crucial to cell protrusion and migration. Phosphorylates PPP1R12A. In concert with FAM89B/LRAP25 mediates the targeting of LIMK1 to the lamellipodium resulting in its activation and subsequent phosphorylation of CFL1 which is important for lamellipodial F-actin regulation. This chain is Serine/threonine-protein kinase MRCK beta, found in Rattus norvegicus (Rat).